Reading from the N-terminus, the 284-residue chain is Tropomyosin isoforms a/b/d/f (284 aa).

The stretch at 1–284 (MDAIKKKMQA…DSTFQELSGY (284 aa)) forms a coiled coil. Residues 40–78 (EEELRDTQKKMTQTGDDLDKAQEDLSAATSKLEEKEKTV) are disordered.

The protein belongs to the tropomyosin family. In terms of tissue distribution, isoform a and isoform d are expressed in body wall muscles, vulva, anus muscles and male tail muscles. Located to the myofibrils of thin actin filaments.

It localises to the cytoplasm. The protein localises to the myofibril. Its subcellular location is the sarcomere. The protein resides in the i band. In terms of biological role, tropomyosin, in association with the troponin complex, plays a central role in the calcium dependent regulation of muscle contraction. Involved in muscle actin filament organization and muscle arm extension and morphology. Protects actin filaments from depolymerization by unc-60 in vitro. Also has a role in male mating behavior by regulating the copulatory spicules. Binds to F-actin. The polypeptide is Tropomyosin isoforms a/b/d/f (lev-11) (Caenorhabditis elegans).